A 584-amino-acid polypeptide reads, in one-letter code: Interferon regulatory factor 2-binding protein 1 (584 aa).

A disordered region spans residues 60 to 127 (VLPEGRSPGP…SGRLPLPSPA (68 aa)). Residues Ser-66 and Ser-125 each carry the phosphoserine modification. Arg-177 carries the post-translational modification Omega-N-methylarginine. Ser-186 carries the post-translational modification Phosphoserine. Positions 197–217 (EKEKQQRNADCLAELNEAMRG) form a coiled coil. Lys-227 is covalently cross-linked (Glycyl lysine isopeptide (Lys-Gly) (interchain with G-Cter in SUMO2)). A disordered region spans residues 346-420 (PAEALPQQYP…PYSAETPGVP (75 aa)). Residues 354 to 369 (YPEPAPAALCGPPPRA) are compositionally biased toward pro residues. 4 positions are modified to phosphoserine: Ser-371, Ser-384, Ser-421, and Ser-436. The tract at residues 433-495 (LGHSPKDPGG…VSGGGSGTGA (63 aa)) is disordered. Lys-438 participates in a covalent cross-link: Glycyl lysine isopeptide (Lys-Gly) (interchain with G-Cter in SUMO2). The segment covering 449–463 (AGGASPAASSTAQPP) has biased composition (low complexity). Ser-453 and Ser-457 each carry phosphoserine. The RING-type; degenerate zinc-finger motif lies at 503 to 550 (CTLCRERLEDTHFVQCPSVPGHKFCFPCSREFIKAQGPAGEVYCPSGD). The tract at residues 503 to 550 (CTLCRERLEDTHFVQCPSVPGHKFCFPCSREFIKAQGPAGEVYCPSGD) is cys-rich.

The protein belongs to the IRF2BP family. Interacts with IRF2. Part of a corepressor complex containing IRF2 and IRF2BP2. Interacts with JDP2.

It is found in the nucleus. It catalyses the reaction S-ubiquitinyl-[E2 ubiquitin-conjugating enzyme]-L-cysteine + [acceptor protein]-L-lysine = [E2 ubiquitin-conjugating enzyme]-L-cysteine + N(6)-ubiquitinyl-[acceptor protein]-L-lysine.. Its function is as follows. Acts as a transcriptional corepressor in a IRF2-dependent manner; this repression is not mediated by histone deacetylase activities. May act as an E3 ligase towards JDP2, enhancing its polyubiquitination. Represses ATF2-dependent transcriptional activation. In Homo sapiens (Human), this protein is Interferon regulatory factor 2-binding protein 1 (IRF2BP1).